The primary structure comprises 558 residues: Formate--tetrahydrofolate ligase (558 aa).

66 to 73 serves as a coordination point for ATP; it reads TPAGEGKT.

It belongs to the formate--tetrahydrofolate ligase family.

It catalyses the reaction (6S)-5,6,7,8-tetrahydrofolate + formate + ATP = (6R)-10-formyltetrahydrofolate + ADP + phosphate. It functions in the pathway one-carbon metabolism; tetrahydrofolate interconversion. The chain is Formate--tetrahydrofolate ligase from Clostridium kluyveri (strain NBRC 12016).